Here is a 406-residue protein sequence, read N- to C-terminus: E3 ubiquitin-protein ligase RING1 (406 aa).

Thr-24 carries the phosphothreonine modification. Residues 30 to 234 (MDGTEIAVSP…GGAGSEDSGD (205 aa)) are necessary for transcriptional repression. Ser-38 is modified (phosphoserine). An RING-type zinc finger spans residues 48–88 (CPICLDMLKNTMTTKECLHRFCSDCIVTALRSGNKECPTCR). Ser-140, Ser-187, and Ser-190 each carry phosphoserine. Disordered regions lie at residues 148-263 (QAMH…GEIE) and 309-354 (QQQE…PSLE). Acidic residues predominate over residues 175–187 (EPGEGEGDGEDVS). The Nuclear localization signal motif lies at 201 to 204 (KRPR). Residues 205–228 (GGGAGGSSVGTGGGGTGGVGGGAG) show a composition bias toward gly residues. Residues Thr-215 and Thr-220 each carry the phosphothreonine modification. A phosphoserine mark is found at Ser-229 and Ser-232. The tract at residues 230–406 (EDSGDRGGTL…LCYAPTKDPK (177 aa)) is necessary for interaction with CBX2. A compositionally biased stretch (gly residues) spans 235 to 244 (RGGTLGGGTL). Pro residues predominate over residues 246–258 (PPSPPGAPSPPEP). A phosphoserine mark is found at Ser-248 and Ser-254. Residues 315-343 (EPGGPGGGASDTGGPDGCGGEGGGAGGGD) show a composition bias toward gly residues.

Component of chromatin-associated Polycomb (PcG) complexes. Interacts with BMI1. Part of the E2F6.com-1 complex in G0 phase composed of E2F6, MGA, MAX, TFDP1, CBX3, BAT8, EUHMTASE1, RING1, RNF2/RING2 MBLR, L3MBTL2 and YAF2. Interacts with CBX2 and PCGF6. Component of a PRC1-like complex. Component of repressive BCOR complex containing Polycomb group subcomplex at least composed of RYBP, PCGF1, BCOR and RNF2/RING2. Interacts with PCGF2, RNF2; CBX6, CBX7 and CBX8. Interacts with PHC2. Interacts with MN1. Interacts with USP26.

The protein resides in the nucleus. The protein localises to the nucleus speckle. It catalyses the reaction S-ubiquitinyl-[E2 ubiquitin-conjugating enzyme]-L-cysteine + [acceptor protein]-L-lysine = [E2 ubiquitin-conjugating enzyme]-L-cysteine + N(6)-ubiquitinyl-[acceptor protein]-L-lysine.. It participates in protein modification; protein ubiquitination. Constitutes one of the E3 ubiquitin-protein ligases that mediate monoubiquitination of 'Lys-119' of histone H2A, thereby playing a central role in histone code and gene regulation. H2A 'Lys-119' ubiquitination gives a specific tag for epigenetic transcriptional repression and participates in X chromosome inactivation of female mammals. Essential component of a Polycomb group (PcG) multiprotein PRC1-like complex, a complex class required to maintain the transcriptionally repressive state of many genes, including Hox genes, throughout development. PcG PRC1 complex acts via chromatin remodeling and modification of histones, rendering chromatin heritably changed in its expressibility. Compared to RNF2/RING2, it does not have the main E3 ubiquitin ligase activity on histone H2A, and it may rather act as a modulator of RNF2/RING2 activity. This chain is E3 ubiquitin-protein ligase RING1, found in Homo sapiens (Human).